The sequence spans 182 residues: Peptidoglycan-recognition protein SB2 (182 aa).

The first 17 residues, 1-17 (MKLQLALVLCGLTLALG), serve as a signal peptide directing secretion. The region spanning 40-165 (PVRLIIIHHT…CQTKATACPG (126 aa)) is the N-acetylmuramoyl-L-alanine amidase domain. H47 provides a ligand contact to Zn(2+). C54 and C60 are disulfide-bonded. N149 carries N-linked (GlcNAc...) asparagine glycosylation. 2 residues coordinate Zn(2+): H155 and C163.

It belongs to the N-acetylmuramoyl-L-alanine amidase 2 family. Requires Zn(2+) as cofactor.

The protein resides in the secreted. The catalysed reaction is Hydrolyzes the link between N-acetylmuramoyl residues and L-amino acid residues in certain cell-wall glycopeptides.. In terms of biological role, N-acetylmuramyl-L-alanine amidase involved in innate immunity by degrading bacterial peptidoglycans (PGN). Probably plays a scavenger role by digesting biologically active PGN into biologically inactive fragments. Has no direct bacteriolytic activity. The polypeptide is Peptidoglycan-recognition protein SB2 (PGRP-SB2) (Drosophila simulans (Fruit fly)).